A 337-amino-acid polypeptide reads, in one-letter code: Phosphate acyltransferase (337 aa).

The protein belongs to the PlsX family. As to quaternary structure, homodimer. Probably interacts with PlsY.

The protein resides in the cytoplasm. It catalyses the reaction a fatty acyl-[ACP] + phosphate = an acyl phosphate + holo-[ACP]. It participates in lipid metabolism; phospholipid metabolism. In terms of biological role, catalyzes the reversible formation of acyl-phosphate (acyl-PO(4)) from acyl-[acyl-carrier-protein] (acyl-ACP). This enzyme utilizes acyl-ACP as fatty acyl donor, but not acyl-CoA. In Polynucleobacter necessarius subsp. necessarius (strain STIR1), this protein is Phosphate acyltransferase.